Here is a 175-residue protein sequence, read N- to C-terminus: MSKKAEPIVIGKFGAVHGIKGWLKVHSYTDDPESIFEYKPLLMKSKGQFQEVNIADWKRHSNGFVAKIVGFDVREEAQALVGLELLVDSDKLPNLEEDFYWRDLIGCQVKTDNGYDLGVVTEIMETGSNDVLVVKANSNDAFGQKERLIPFIDKQVISNVDITSKLIQVNWEPDF.

The PRC barrel domain maps to 96–175; sequence EEDFYWRDLI…LIQVNWEPDF (80 aa).

This sequence belongs to the RimM family. Binds ribosomal protein uS19.

The protein localises to the cytoplasm. In terms of biological role, an accessory protein needed during the final step in the assembly of 30S ribosomal subunit, possibly for assembly of the head region. Essential for efficient processing of 16S rRNA. May be needed both before and after RbfA during the maturation of 16S rRNA. It has affinity for free ribosomal 30S subunits but not for 70S ribosomes. This Psychromonas ingrahamii (strain DSM 17664 / CCUG 51855 / 37) protein is Ribosome maturation factor RimM.